A 279-amino-acid polypeptide reads, in one-letter code: Undecaprenyl-diphosphatase (279 aa).

8 helical membrane passes run 2 to 22 (LFIE…TEWL), 44 to 64 (AFME…VIVI), 85 to 105 (WQLW…AVPL), 113 to 133 (FNHM…FLWI), 163 to 183 (VLSI…AIIL), 188 to 208 (TVAA…YSGL), 225 to 245 (LLVL…VIKL), and 255 to 275 (FTVF…YSVF).

Belongs to the UppP family.

The protein localises to the cell membrane. It carries out the reaction di-trans,octa-cis-undecaprenyl diphosphate + H2O = di-trans,octa-cis-undecaprenyl phosphate + phosphate + H(+). Functionally, catalyzes the dephosphorylation of undecaprenyl diphosphate (UPP). Confers resistance to bacitracin. The polypeptide is Undecaprenyl-diphosphatase (Streptococcus equi subsp. zooepidemicus (strain H70)).